We begin with the raw amino-acid sequence, 92 residues long: Phospholemman (92 aa).

Positions 1-20 (MASLGHILVFCVGLLTMAKA) are cleaved as a signal peptide. Residues 21–35 (ESPKEHDPFTYDYQS) are Extracellular-facing. The chain crosses the membrane as a helical span at residues 36 to 56 (LQIGGLVIAGILFILGILIVL). At 57–92 (SRRCRCKFNQQQRTGEPDEEEGTFRSSIRRLSTRRR) the chain is on the cytoplasmic side. Cys-60 is lipidated: S-palmitoyl cysteine. S-glutathionyl cysteine; alternate is present on Cys-62. Cys-62 is lipidated: S-palmitoyl cysteine; alternate. The segment at 65-92 (NQQQRTGEPDEEEGTFRSSIRRLSTRRR) is disordered. Thr-79 bears the Phosphothreonine mark. Ser-82 carries the phosphoserine modification. Position 83 is a phosphoserine; by PKA and PKC (Ser-83). The span at 83–92 (SIRRLSTRRR) shows a compositional bias: basic residues. Ser-88 is modified (phosphoserine; by PKA). Thr-89 bears the Phosphothreonine; by PKC mark.

This sequence belongs to the FXYD family. Homotetramer. Monomer. Regulatory subunit of the sodium/potassium-transporting ATPase (NKA) which is composed of a catalytic alpha subunit, an auxiliary non-catalytic beta subunit and an additional regulatory subunit. The monomeric form associates with NKA while the oligomeric form does not. Interacts with the catalytic alpha-1 subunit ATP1A1. Also interacts with the catalytic alpha-2 and alpha-3 subunits ATP1A2 and ATP1A3. Very little interaction with ATP1A1, ATP1A2 or ATP1A3 when phosphorylated at Ser-83. Interacts with the non-catalytic beta-1 subunit ATP1B1. Oxidative stress decreases interaction with ATP1A1 but increases interaction with ATP1B1. Post-translationally, major plasma membrane substrate for cAMP-dependent protein kinase (PKA) and protein kinase C (PKC) in several different tissues. Phosphorylated in response to insulin and adrenergic stimulation. Phosphorylation at Ser-88 stimulates sodium/potassium-transporting ATPase activity while the unphosphorylated form inhibits sodium/potassium-transporting ATPase activity. Phosphorylation increases tetramerization, decreases binding to ATP1A1 and reduces inhibition of ATP1A1 activity. Phosphorylation at Ser-83 leads to greatly reduced interaction with ATP1A1, ATP1A2 and ATP1A3. May be phosphorylated by DMPK. Palmitoylation increases half-life and stability and is enhanced upon phosphorylation at Ser-88 by PKA. Highest expression in skeletal muscle and heart. Moderate levels in brain, placenta, lung, liver, pancreas, uterus, bladder, prostate, small intestine and colon with mucosal lining. Very low levels in kidney, colon and small intestine without mucosa, prostate without endothelial lining, spleen, and testis.

The protein localises to the cell membrane. It localises to the sarcolemma. Its subcellular location is the apical cell membrane. It is found in the membrane. The protein resides in the caveola. The protein localises to the T-tubule. Functionally, associates with and regulates the activity of the sodium/potassium-transporting ATPase (NKA) which transports Na(+) out of the cell and K(+) into the cell. Inhibits NKA activity in its unphosphorylated state and stimulates activity when phosphorylated. Reduces glutathionylation of the NKA beta-1 subunit ATP1B1, thus reversing glutathionylation-mediated inhibition of ATP1B1. Contributes to female sexual development by maintaining the excitability of neurons which secrete gonadotropin-releasing hormone. The chain is Phospholemman from Homo sapiens (Human).